The chain runs to 263 residues: H-2 class II histocompatibility antigen, A-K beta chain (263 aa).

The signal sequence occupies residues 1–27; sequence MALQIPSLLLLAAVVVLTVLSSPGTEG. The interval 28–120 is beta-1; it reads GNSERHFVHQ…TETPTSLRRL (93 aa). Residues 28 to 224 lie on the Extracellular side of the membrane; it reads GNSERHFVHQ…RAQSESARSK (197 aa). 2 disulfides stabilise this stretch: cysteine 42–cysteine 104 and cysteine 143–cysteine 199. Residue asparagine 46 is glycosylated (N-linked (GlcNAc...) asparagine). The segment at 121-214 is beta-2; sequence EQPSVVISLS…SLKSPITVEW (94 aa). The Ig-like C1-type domain maps to 123–211; that stretch reads PSVVISLSRT…EHPSLKSPIT (89 aa). The tract at residues 215–224 is connecting peptide; sequence RAQSESARSK. The chain crosses the membrane as a helical span at residues 225 to 245; that stretch reads MLSGIGGCVLGVIFLGLGLFI. The Cytoplasmic portion of the chain corresponds to 246-263; sequence RHRSQKGPRGPPPAGLLQ.

This sequence belongs to the MHC class II family. Ubiquitinated in immature dendritic cells leading to down-regulation of MHC class II.

The protein resides in the membrane. The chain is H-2 class II histocompatibility antigen, A-K beta chain (H2-Ab1) from Mus musculus (Mouse).